Here is a 221-residue protein sequence, read N- to C-terminus: UPF0758 protein HI_0952 (221 aa).

The 123-residue stretch at 99-221 (IINDPETVKL…CYSFAENCLL (123 aa)) folds into the MPN domain. The Zn(2+) site is built by His170, His172, and Asp183. Positions 170 to 183 (HNHPSGITEPSYSD) match the JAMM motif motif.

This sequence belongs to the UPF0758 family.

The polypeptide is UPF0758 protein HI_0952 (Haemophilus influenzae (strain ATCC 51907 / DSM 11121 / KW20 / Rd)).